Consider the following 235-residue polypeptide: Small ribosomal subunit protein uS3 (235 aa).

A KH type-2 domain is found at 39–107; sequence VRKFLNKELA…PAQINIAEVK (69 aa). Residues 215 to 235 are disordered; that stretch reads AQSEQQPADKPKKAPRGKGRK.

The protein belongs to the universal ribosomal protein uS3 family. As to quaternary structure, part of the 30S ribosomal subunit. Forms a tight complex with proteins S10 and S14.

Its function is as follows. Binds the lower part of the 30S subunit head. Binds mRNA in the 70S ribosome, positioning it for translation. In Haemophilus influenzae (strain ATCC 51907 / DSM 11121 / KW20 / Rd), this protein is Small ribosomal subunit protein uS3.